An 849-amino-acid polypeptide reads, in one-letter code: Villin-1 (849 aa).

5 Gelsolin-like repeats span residues 30–107 (IEKS…DKFL), 147–213 (RVTE…EDGK), 262–335 (VPVE…TVEF), 405–475 (QEQL…PEMF), and 527–566 (AIQVDLAASSLNSSHCYILQAGGSFFTWLGSLSSPSDHNL). Residues 739 to 849 (ETPERSLRKS…AVATGTPRRL (111 aa)) form a disordered region. Low complexity-rich tracts occupy residues 747-782 (KSSSSSLPRRSPGTSSSEPTTPEQRAAARTFASAST) and 791-823 (PAALSPSLSTPSPSPRSRSSASSSPASWNSTPS).

This sequence belongs to the villin/gelsolin family.

It is found in the cytoplasm. Its subcellular location is the cytoskeleton. Ca(2+)-independent actin-binding protein. Binds actin microfilaments (MFs). Involved in actin filament bundling, severing and capping. Caps the barbed end of actin filaments and protects them from disassembly. Promotes VLN3-mediated MF severing. This Oryza sativa subsp. indica (Rice) protein is Villin-1.